Reading from the N-terminus, the 106-residue chain is Ribosomal processing cysteine protease Prp (106 aa).

Residue H22 is the Proton donor of the active site. The active-site Nucleophile is the C34.

Belongs to the Prp family. In terms of assembly, homodimer. A mutant protein unable to cleave bL27 copurifies with its substrate.

Its activity is regulated as follows. Not inhibited by short peptide analogs; a 6-mer inhibits only 20% while a 13-mer inhibits 63%. Inhibited by Ac-KLNLQFF-CH(2) which binds covalantly to Cys-34. Inhibited by mersalyl acid (C13H18HgNO6). An essential cysteine protease that cleaves the N-terminal 9 amino acids from ribosomal protein bL27. Also acts as an N-terminal protease on the major capsid and scaffold assembly proteins of bacteriophage 80alpha. Cleavage of the N-terminus of bL27 (and thus this enzyme) is essential for growth; it cannot be replaced by a 'pre-cleaved' or non-cleavable form of bL27. Might serve a chaperone function during ribosome assembly. The polypeptide is Ribosomal processing cysteine protease Prp (Staphylococcus aureus (strain NCTC 8325 / PS 47)).